A 148-amino-acid polypeptide reads, in one-letter code: Deoxyuridine 5'-triphosphate nucleotidohydrolase (148 aa).

Residues 68–70, N81, 85–87, and K95 each bind substrate; these read RSG and TID.

This sequence belongs to the dUTPase family. Mg(2+) serves as cofactor.

It catalyses the reaction dUTP + H2O = dUMP + diphosphate + H(+). It functions in the pathway pyrimidine metabolism; dUMP biosynthesis; dUMP from dCTP (dUTP route): step 2/2. This enzyme is involved in nucleotide metabolism: it produces dUMP, the immediate precursor of thymidine nucleotides and it decreases the intracellular concentration of dUTP so that uracil cannot be incorporated into DNA. This chain is Deoxyuridine 5'-triphosphate nucleotidohydrolase, found in Rickettsia conorii (strain ATCC VR-613 / Malish 7).